We begin with the raw amino-acid sequence, 275 residues long: NH(3)-dependent NAD(+) synthetase (275 aa).

50–57 (GISGGVDS) lines the ATP pocket. Position 56 (Asp-56) interacts with Mg(2+). A deamido-NAD(+)-binding site is contributed by Arg-147. Thr-167 provides a ligand contact to ATP. Glu-172 is a binding site for Mg(2+). Deamido-NAD(+) is bound by residues Lys-180 and Asp-187. Positions 196 and 218 each coordinate ATP. 267-268 (HK) serves as a coordination point for deamido-NAD(+).

This sequence belongs to the NAD synthetase family. In terms of assembly, homodimer.

It catalyses the reaction deamido-NAD(+) + NH4(+) + ATP = AMP + diphosphate + NAD(+) + H(+). It functions in the pathway cofactor biosynthesis; NAD(+) biosynthesis; NAD(+) from deamido-NAD(+) (ammonia route): step 1/1. In terms of biological role, catalyzes the ATP-dependent amidation of deamido-NAD to form NAD. Uses ammonia as a nitrogen source. This Pseudomonas aeruginosa (strain LESB58) protein is NH(3)-dependent NAD(+) synthetase.